The sequence spans 265 residues: MSSATQHIPFRLDGKVALVTGSGRGIGAAMATELGRAGAKVIVNYANSKESAEKLVEEIKKLGTDAVALQADVSKVPQTVRLFDEAIKVWGRLDIVCSNAGVVSFGHLEEVTEEEFDRVFTINTRGQFFVAREAYKHLNEGGRIIMMSSNTAHAFAVPRHSLYSGSKGAIESFVKVLAIDCGKKKITVNAVAPGGTVTDMFHDVSQHYIPGGEKYTAEERQQMAAHASPLVRNGYPVDIANAVVFLASKEGEWVNGKTIGVDGGS.

Residues isoleucine 26, aspartate 72, asparagine 99, and arginine 132 each contribute to the NADP(+) site. Active-site proton donor residues include serine 148 and serine 149. Residues tyrosine 163, lysine 167, and threonine 198 each coordinate NADP(+). Tyrosine 163 acts as the Proton acceptor in catalysis. The active-site Lowers pKa of active site Tyr is the lysine 167.

The protein belongs to the short-chain dehydrogenases/reductases (SDR) family.

The protein operates within secondary metabolite biosynthesis. Short-chain dehydrogenase/reductase; part of the gene cluster that mediates the biosynthesis of dibenzodioxocinones such as pestalotiollide B, a novel class of inhibitors against cholesterol ester transfer protein (CEPT). The biosynthesis initiates from condensation of acetate and malonate units catalyzed by the non-reducing PKS pks8/GME11356. Pks8/GME11356 lacks a thioesterase (TE) domain, which is important to the cyclizing of the third ring of atrochrysone carboxylic acid, and the esterase GME11355 might play the role of TE and catalyzes the cyclization reaction of the C ring. The lactamase-like protein GME11357 (or other beta-lactamases in Pestalotiopsis microspora) probably hydrolyzes the thioester bond between the ACP of pks8/GME11356 and the intermediate to release atrochrysone carboxylic acid, which is spontaneously dehydrates to form endocrocin anthrone. Endocrocin anthrone is further converted to emodin via the endocrocin intermediate. Emodin is then oxidized by several enzymes such as the Baeyer-Villiger oxidase GME11358, the oxidoreductase GME11367, the short chain dehydrogenase/reductase GME11373, as well as by other oxidoreductases from the cluster, to modify the A and C rings and open the B ring, and finally yield monodictyphenone. The prenyltransferase GME11375 may catalyze the addition reaction between the C5 side chains and the carbon bone of dibenzodioxocinones. The remaining biochemical reactions to the final product dibenzodioxocinones should be methylation catalyzed by methyltransferase GME11366 and reduction and lactonization reaction catalyzed by a series of oxidordeuctases. The chain is Short-chain dehydrogenase/reductase GME11373 from Pestalotiopsis microspora.